The following is a 210-amino-acid chain: Isochorismatase domain-containing protein 2 (210 aa).

Phosphoserine is present on Ser7.

It belongs to the isochorismatase family. In terms of assembly, interacts with CDKN2A.

It localises to the cytoplasm. The protein resides in the nucleus. In Rattus norvegicus (Rat), this protein is Isochorismatase domain-containing protein 2 (Isoc2).